The sequence spans 271 residues: MPELPEVEVTKQGVSPYLIDNRVTDLIIRNPSLRWPVPDIAKQIIGQTIRAVRRRAKYLLIDTDAGTTIVHLGMSGSLRILPINSPVEKHDHIDLVLASGKILRYNDPRRFGAWLWNELPEQAHPLLAKLGPEPLESAFNSSYLLSALANKKKAIKLCLMDNHIVVGVGNIYANEALFAAGIHPQAEAGKVDAERISILVAEVKQILARAIKQGGTTLKDFTNAEGKPGYFAQKLHVYGRGGDTCTHCGQLLSEIRLGQRATVFCSICQQR.

The active-site Schiff-base intermediate with DNA is the Pro2. Glu3 functions as the Proton donor in the catalytic mechanism. Lys57 acts as the Proton donor; for beta-elimination activity in catalysis. DNA contacts are provided by His90, Arg109, and Lys151. An FPG-type zinc finger spans residues 236-270; sequence HVYGRGGDTCTHCGQLLSEIRLGQRATVFCSICQQ. Arg260 functions as the Proton donor; for delta-elimination activity in the catalytic mechanism.

Belongs to the FPG family. In terms of assembly, monomer. Zn(2+) serves as cofactor.

It catalyses the reaction Hydrolysis of DNA containing ring-opened 7-methylguanine residues, releasing 2,6-diamino-4-hydroxy-5-(N-methyl)formamidopyrimidine.. It carries out the reaction 2'-deoxyribonucleotide-(2'-deoxyribose 5'-phosphate)-2'-deoxyribonucleotide-DNA = a 3'-end 2'-deoxyribonucleotide-(2,3-dehydro-2,3-deoxyribose 5'-phosphate)-DNA + a 5'-end 5'-phospho-2'-deoxyribonucleoside-DNA + H(+). Its function is as follows. Involved in base excision repair of DNA damaged by oxidation or by mutagenic agents. Acts as a DNA glycosylase that recognizes and removes damaged bases. Has a preference for oxidized purines, such as 7,8-dihydro-8-oxoguanine (8-oxoG). Has AP (apurinic/apyrimidinic) lyase activity and introduces nicks in the DNA strand. Cleaves the DNA backbone by beta-delta elimination to generate a single-strand break at the site of the removed base with both 3'- and 5'-phosphates. This chain is Formamidopyrimidine-DNA glycosylase, found in Shewanella piezotolerans (strain WP3 / JCM 13877).